The primary structure comprises 387 residues: Mannitol-1-phosphate 5-dehydrogenase (387 aa).

An NAD(+)-binding site is contributed by 3–14 (ALHFGAGNIGRG).

It belongs to the mannitol dehydrogenase family.

It carries out the reaction D-mannitol 1-phosphate + NAD(+) = beta-D-fructose 6-phosphate + NADH + H(+). This Yersinia pseudotuberculosis serotype IB (strain PB1/+) protein is Mannitol-1-phosphate 5-dehydrogenase.